Reading from the N-terminus, the 183-residue chain is Ribosome-recycling factor (183 aa).

Belongs to the RRF family.

The protein localises to the cytoplasm. Responsible for the release of ribosomes from messenger RNA at the termination of protein biosynthesis. May increase the efficiency of translation by recycling ribosomes from one round of translation to another. The chain is Ribosome-recycling factor from Buchnera aphidicola subsp. Baizongia pistaciae (strain Bp).